We begin with the raw amino-acid sequence, 182 residues long: Lipoprotein signal peptidase (182 aa).

The next 3 membrane-spanning stretches (helical) occupy residues 21–41 (LLLS…VLAV), 74–94 (GYTW…FWMG), and 98–118 (VSPW…GNLV). Residues Asp-134 and Asp-148 contribute to the active site. Residues 146–166 (VADPSVVGGAILLVVLSIFGY) traverse the membrane as a helical segment.

Belongs to the peptidase A8 family.

It localises to the cell membrane. It catalyses the reaction Release of signal peptides from bacterial membrane prolipoproteins. Hydrolyzes -Xaa-Yaa-Zaa-|-(S,diacylglyceryl)Cys-, in which Xaa is hydrophobic (preferably Leu), and Yaa (Ala or Ser) and Zaa (Gly or Ala) have small, neutral side chains.. Its pathway is protein modification; lipoprotein biosynthesis (signal peptide cleavage). This protein specifically catalyzes the removal of signal peptides from prolipoproteins. This is Lipoprotein signal peptidase from Mycobacterium avium (strain 104).